A 111-amino-acid chain; its full sequence is Antirepressor protein CarS (111 aa).

In terms of assembly, monomer. Interacts with CarA and CarH.

Functionally, involved in carotenoid biosynthesis. Antagonizes the transcriptional repressor proteins CarA and CarH by preventing their binding to DNA. Can also dissociate preformed CarA-DNA complexes. Does not bind DNA. The sequence is that of Antirepressor protein CarS (carS) from Myxococcus xanthus.